The primary structure comprises 321 residues: Polygalacturonan/rhamnogalacturonan transport system permease protein YteP (321 aa).

Residues 1–144 (MKTAEAQAPA…YIPHFMSWVI (144 aa)) enclose the ABC transmembrane type-1 domain. 3 helical membrane-spanning segments follow: residues 21 to 41 (RKRL…ILPG), 63 to 83 (YQPF…FIRL), and 123 to 143 (IALF…MSWV).

Belongs to the binding-protein-dependent transport system permease family. In terms of assembly, the complex is probably composed of two ATP-binding proteins (MsmX), two transmembrane proteins (YtcP and YteP) and a solute-binding protein (YtcQ).

The protein localises to the cell membrane. Functionally, involved in pectin degradation. Part of the ABC transporter complex YtcQP-YteP involved in the uptake of polygalacturonan and rhamnogalacturonan type I. Responsible for the translocation of the substrate across the membrane. This Bacillus subtilis (strain 168) protein is Polygalacturonan/rhamnogalacturonan transport system permease protein YteP (yteP).